Reading from the N-terminus, the 359-residue chain is Probable dual-specificity RNA methyltransferase RlmN (359 aa).

The active-site Proton acceptor is Glu93. One can recognise a Radical SAM core domain in the interval 107–337 (KSERVTLCVS…VTMRYEKGHD (231 aa)). The cysteines at positions 114 and 342 are disulfide-linked. 3 residues coordinate [4Fe-4S] cluster: Cys121, Cys125, and Cys128. S-adenosyl-L-methionine contacts are provided by residues 168 to 169 (GE), Ser200, 223 to 225 (SLH), and Asn299. Cys342 acts as the S-methylcysteine intermediate in catalysis.

This sequence belongs to the radical SAM superfamily. RlmN family. It depends on [4Fe-4S] cluster as a cofactor.

It is found in the cytoplasm. The enzyme catalyses adenosine(2503) in 23S rRNA + 2 reduced [2Fe-2S]-[ferredoxin] + 2 S-adenosyl-L-methionine = 2-methyladenosine(2503) in 23S rRNA + 5'-deoxyadenosine + L-methionine + 2 oxidized [2Fe-2S]-[ferredoxin] + S-adenosyl-L-homocysteine. The catalysed reaction is adenosine(37) in tRNA + 2 reduced [2Fe-2S]-[ferredoxin] + 2 S-adenosyl-L-methionine = 2-methyladenosine(37) in tRNA + 5'-deoxyadenosine + L-methionine + 2 oxidized [2Fe-2S]-[ferredoxin] + S-adenosyl-L-homocysteine. Functionally, specifically methylates position 2 of adenine 2503 in 23S rRNA and position 2 of adenine 37 in tRNAs. The polypeptide is Probable dual-specificity RNA methyltransferase RlmN (Akkermansia muciniphila (strain ATCC BAA-835 / DSM 22959 / JCM 33894 / BCRC 81048 / CCUG 64013 / CIP 107961 / Muc)).